The chain runs to 193 residues: Thymidine kinase (193 aa).

A9 to S16 is a binding site for ATP.

Belongs to the thymidine kinase family.

It carries out the reaction thymidine + ATP = dTMP + ADP + H(+). Functionally, this thymidine kinase is one of the enzymes that catalyze DNA precursor synthesis. Although tk is a nonessential gene, some strains of host E.coli do not support the growth of phages that lack this gene. The sequence is that of Thymidine kinase (TK) from Escherichia coli (Bacteriophage T4).